The primary structure comprises 428 residues: Histidine--tRNA ligase (428 aa).

It belongs to the class-II aminoacyl-tRNA synthetase family. In terms of assembly, homodimer.

The protein localises to the cytoplasm. The enzyme catalyses tRNA(His) + L-histidine + ATP = L-histidyl-tRNA(His) + AMP + diphosphate + H(+). This Buchnera aphidicola subsp. Schizaphis graminum (strain Sg) protein is Histidine--tRNA ligase.